The chain runs to 260 residues: Thiazole synthase (260 aa).

Lys-96 serves as the catalytic Schiff-base intermediate with DXP. Residues Gly-157, 184 to 185, and 206 to 207 each bind 1-deoxy-D-xylulose 5-phosphate; these read AG and NT.

The protein belongs to the ThiG family. As to quaternary structure, homotetramer. Forms heterodimers with either ThiH or ThiS.

It is found in the cytoplasm. It catalyses the reaction [ThiS sulfur-carrier protein]-C-terminal-Gly-aminoethanethioate + 2-iminoacetate + 1-deoxy-D-xylulose 5-phosphate = [ThiS sulfur-carrier protein]-C-terminal Gly-Gly + 2-[(2R,5Z)-2-carboxy-4-methylthiazol-5(2H)-ylidene]ethyl phosphate + 2 H2O + H(+). The protein operates within cofactor biosynthesis; thiamine diphosphate biosynthesis. In terms of biological role, catalyzes the rearrangement of 1-deoxy-D-xylulose 5-phosphate (DXP) to produce the thiazole phosphate moiety of thiamine. Sulfur is provided by the thiocarboxylate moiety of the carrier protein ThiS. In vitro, sulfur can be provided by H(2)S. The protein is Thiazole synthase of Rhodopseudomonas palustris (strain BisB18).